We begin with the raw amino-acid sequence, 513 residues long: CUGBP Elav-like family member 1 (513 aa).

A Phosphothreonine modification is found at Thr-31. 2 consecutive RRM domains span residues 43–126 (IKMF…PADS) and 135–215 (RKLF…FADT). Residue Lys-136 forms a Glycyl lysine isopeptide (Lys-Gly) (interchain with G-Cter in SUMO2) linkage. Residues Ser-206 and Ser-329 each carry the phosphoserine modification. Residues 304 to 336 (TPSGTNALTTSSSPLSVLTSSGSSPSSSSSNSV) form a disordered region. A compositionally biased stretch (low complexity) spans 311-336 (LTTSSSPLSVLTSSGSSPSSSSSNSV). An RRM 3 domain is found at 428-506 (ANLFIYHLPQ…KRLKVQLKRS (79 aa)).

The protein belongs to the CELF/BRUNOL family. In terms of assembly, associates with polysomes. Interacts with HNRNPH1; the interaction in RNA-dependent. Interacts with PARN. Component of an EIF2 complex at least composed of CELF1/CUGBP1, CALR, CALR3, EIF2S1, EIF2S2, HSP90B1 and HSPA5.

The protein localises to the nucleus. It is found in the cytoplasm. Functionally, RNA-binding protein implicated in the regulation of several post-transcriptional events. Involved in pre-mRNA alternative splicing, mRNA translation and stability. Mediates exon inclusion and/or exclusion in pre-mRNA that are subject to tissue-specific and developmentally regulated alternative splicing. Specifically activates exon 5 inclusion of cardiac isoforms of TNNT2 during heart remodeling at the juvenile to adult transition. Acts both as an activator and as a repressor of a pair of coregulated exons: promotes inclusion of the smooth muscle (SM) exon but exclusion of the non-muscle (NM) exon in actinin pre-mRNAs. Activates SM exon 5 inclusion by antagonizing the repressive effect of PTB. Promotes exclusion of exon 11 of the INSR pre-mRNA. Inhibits, together with HNRNPH1, insulin receptor (IR) pre-mRNA exon 11 inclusion in myoblast. Increases translation and controls the choice of translation initiation codon of CEBPB mRNA. Increases mRNA translation of CEBPB in aging liver. Increases translation of CDKN1A mRNA by antagonizing the repressive effect of CALR3. Mediates rapid cytoplasmic mRNA deadenylation. Recruits the deadenylase PARN to the poly(A) tail of EDEN-containing mRNAs to promote their deadenylation. Required for completion of spermatogenesis. Binds to (CUG)n triplet repeats in the 3'-UTR of transcripts such as DMPK and to Bruno response elements (BREs). Binds to muscle-specific splicing enhancer (MSE) intronic sites flanking the alternative exon 5 of TNNT2 pre-mRNA. Binds to AU-rich sequences (AREs or EDEN-like) localized in the 3'-UTR of JUN and FOS mRNAs. Binds to the IR RNA. Binds to the 5'-region of CDKN1A and CEBPB mRNAs. Binds with the 5'-region of CEBPB mRNA in aging liver. May be a specific regulator of miRNA biogenesis. Binds to primary microRNA pri-MIR140 and, with CELF2, negatively regulates the processing to mature miRNA. In Pongo abelii (Sumatran orangutan), this protein is CUGBP Elav-like family member 1 (CELF1).